Here is a 78-residue protein sequence, read N- to C-terminus: uncharacterized protein (78 aa).

A run of 2 helical transmembrane segments spans residues 12-32 (LVSV…ICVV) and 51-71 (GVGA…VAVH).

Its subcellular location is the cell membrane. This is an uncharacterized protein from Treponema pallidum (strain Nichols).